A 403-amino-acid chain; its full sequence is Heptahelical transmembrane protein ADIPOR3 (403 aa).

The Cytoplasmic segment spans residues 1–73 (MAAAAGEEVE…LSAFSIHNET (73 aa)). A helical transmembrane segment spans residues 74-94 (LNVWTHLIGFFIFLVLTIYTA). At 95–209 (TQVPNVVDLQ…QLIRPIPRWP (115 aa)) the chain is on the extracellular side. Residues 210–230 (FYAFLGGAMFCLLASSTCHLL) traverse the membrane as a helical segment. At 231–246 (SCHSRRLAYIMLRLDY) the chain is on the cytoplasmic side. The chain crosses the membrane as a helical span at residues 247-267 (AGIAALIATSFYPPVYYSFMC). Residues 268-274 (YPFFCNL) are Extracellular-facing. Residues 275-295 (YLSCITILGVATIAFSLLPVF) form a helical membrane-spanning segment. Residues 296–306 (QNPEFRTIRAC) are Cytoplasmic-facing. A helical membrane pass occupies residues 307-327 (LFFGMGASGVIPVIHKLILFW). At 328–331 (HQPE) the chain is on the extracellular side. A helical membrane pass occupies residues 332–352 (ALHTTAYEVLMGLFYGIGALV). The Cytoplasmic segment spans residues 353–374 (YATRVPERWMPGKFDIAGHSHQ). Residues 375–395 (LFHVLVVAGAYTHYHSGLVYL) form a helical membrane-spanning segment. The Extracellular segment spans residues 396–403 (KWRDVQGC).

Belongs to the ADIPOR family.

The protein resides in the membrane. In terms of biological role, may play a role in abiotic stress response. The polypeptide is Heptahelical transmembrane protein ADIPOR3 (ADIPOR3) (Oryza sativa subsp. japonica (Rice)).